The primary structure comprises 693 residues: Auxin response factor 10 (693 aa).

The TF-B3 DNA-binding region spans 115-217 (FAKTLTQSDA…DLCVGIRRAK (103 aa)). The PB1 domain maps to 580–668 (TGHCKVFMES…DIGGDNVRKT (89 aa)).

It belongs to the ARF family. As to quaternary structure, homodimers and heterodimers. As to expression, expressed in the whole plant.

It localises to the nucleus. Its function is as follows. Auxin response factors (ARFs) are transcriptional factors that bind specifically to the DNA sequence 5'-TGTCTC-3' found in the auxin-responsive promoter elements (AuxREs). Could act as transcriptional activator or repressor. Formation of heterodimers with Aux/IAA proteins may alter their ability to modulate early auxin response genes expression. In Arabidopsis thaliana (Mouse-ear cress), this protein is Auxin response factor 10 (ARF10).